We begin with the raw amino-acid sequence, 46 residues long: Daisho2 (46 aa).

Residues 1-22 (MNCLKICGFFFALIAALATAEA) form the signal peptide.

As to expression, hemolymph (at protein level).

It is found in the secreted. In terms of biological role, peptide which plays a role in the humoral immune response to a subset of filamentous fungi, including F.oxysporum and F.verticillioides. This chain is Daisho2, found in Drosophila melanogaster (Fruit fly).